The primary structure comprises 250 residues: Aquaporin TIP2-2 (250 aa).

Helical transmembrane passes span 22 to 42 and 54 to 74; these read VAEF…AIAF and AGLV…VSVA. Residues 83-85 carry the NPA 1 motif; that stretch reads NPA. The next 3 helical transmembrane spans lie at 97–119, 142–162, and 169–189; these read TVLT…CLLL, GVVF…ATAA, and LGTI…LAAG. The short motif at 197-199 is the NPA 2 element; that stretch reads NPA. A helical transmembrane segment spans residues 218–238; sequence WVGPLIGGGLAGLVYGDVFIG.

It belongs to the MIP/aquaporin (TC 1.A.8) family. TIP (TC 1.A.8.10) subfamily.

It localises to the vacuole membrane. Its function is as follows. Aquaporins facilitate the transport of water and small neutral solutes across cell membranes. The protein is Aquaporin TIP2-2 (TIP2-2) of Zea mays (Maize).